The sequence spans 259 residues: Emerin (259 aa).

N-acetylmethionine is present on methionine 1. Residues 1 to 45 (MDDYAVLSDTELAAVLRQYNIPHGPIVGSTRKLYEKKIFEYETQR) enclose the LEM domain. A phosphoserine mark is found at serine 8, serine 29, serine 54, serine 72, serine 88, serine 99, serine 141, and serine 142. Residues 46–223 (RRLLPPNSSS…PAAALGQDRQ (178 aa)) are interaction with F-actin. Residue tyrosine 161 is modified to Phosphotyrosine. The interval 168 to 187 (RPISNVSRSSLGLSYYPTSS) is interaction with CTNNB1. Serine 171, serine 174, and serine 176 each carry phosphoserine. The chain crosses the membrane as a helical span at residues 224–244 (VPLWGQLLLFLVFAAFLLFVY).

As to quaternary structure, interacts with lamins A and C, BANF1, GMCL, BCLAF1 and YTHDC1/YT521. Interacts with TMEM43; the interaction retains emerin in the inner nuclear membrane. Interacts with ACTB, SPTAN1, F-actin, CTNNB1 and beta-tubulin. Interacts with SUN1 and SUN2. Interacts with TMEM201. Interacts with NEMP1. In the ovary, highest expression is seen in primordial follicle oocytes (at protein level). Detected in embryonic fibroblasts, skeletal muscle, heart muscle and tongue epithelium (at protein level). Widely expressed.

It localises to the nucleus inner membrane. The protein resides in the nucleus outer membrane. Functionally, stabilizes and promotes the formation of a nuclear actin cortical network. Stimulates actin polymerization in vitro by binding and stabilizing the pointed end of growing filaments. Inhibits beta-catenin activity by preventing its accumulation in the nucleus. Acts by influencing the nuclear accumulation of beta-catenin through a CRM1-dependent export pathway. Links centrosomes to the nuclear envelope via a microtubule association. Required for proper localization of non-farnesylated prelamin-A/C. Together with NEMP1, contributes to nuclear envelope stiffness in germ cells. This is Emerin (Emd) from Mus musculus (Mouse).